The chain runs to 294 residues: Bifunctional protein FolD (294 aa).

NADP(+) is bound by residues 166-168, Ser191, and Ile232; that span reads GRS.

Belongs to the tetrahydrofolate dehydrogenase/cyclohydrolase family. In terms of assembly, homodimer.

The catalysed reaction is (6R)-5,10-methylene-5,6,7,8-tetrahydrofolate + NADP(+) = (6R)-5,10-methenyltetrahydrofolate + NADPH. It carries out the reaction (6R)-5,10-methenyltetrahydrofolate + H2O = (6R)-10-formyltetrahydrofolate + H(+). It participates in one-carbon metabolism; tetrahydrofolate interconversion. Catalyzes the oxidation of 5,10-methylenetetrahydrofolate to 5,10-methenyltetrahydrofolate and then the hydrolysis of 5,10-methenyltetrahydrofolate to 10-formyltetrahydrofolate. This Nitrobacter hamburgensis (strain DSM 10229 / NCIMB 13809 / X14) protein is Bifunctional protein FolD.